The sequence spans 698 residues: Elongation factor G (698 aa).

The tr-type G domain occupies 6–281 (ENIRNIGICA…AVVDYLPSPI (276 aa)). GTP contacts are provided by residues 15–22 (AHIDAGKT), 79–83 (DTPGH), and 133–136 (NKMD).

The protein belongs to the TRAFAC class translation factor GTPase superfamily. Classic translation factor GTPase family. EF-G/EF-2 subfamily.

The protein localises to the cytoplasm. In terms of biological role, catalyzes the GTP-dependent ribosomal translocation step during translation elongation. During this step, the ribosome changes from the pre-translocational (PRE) to the post-translocational (POST) state as the newly formed A-site-bound peptidyl-tRNA and P-site-bound deacylated tRNA move to the P and E sites, respectively. Catalyzes the coordinated movement of the two tRNA molecules, the mRNA and conformational changes in the ribosome. The polypeptide is Elongation factor G (Rickettsia bellii (strain RML369-C)).